Consider the following 372-residue polypeptide: Partitioning defective 6 homolog beta (372 aa).

A Phosphoserine modification is found at Ser-11. One can recognise a PB1 domain in the interval 16–96 (TMEVKSKFGA…PLLRIFIQKK (81 aa)). Residues 126-253 (RKKPHIVISM…ITVRPANQRN (128 aa)) are interaction with PARD3 and CDC42. The Pseudo-CRIB domain maps to 133–150 (ISMPQDFRPVSSIIDVDI). The 94-residue stretch at 157 to 250 (RVRLYKYGTE…NLIITVRPAN (94 aa)) folds into the PDZ domain. Polar residues predominate over residues 253 to 272 (NNVVRNSRTSGSSGQSTDNS). The interval 253 to 292 (NNVVRNSRTSGSSGQSTDNSLLGYPQQIEPSFEPEDEDSE) is disordered.

It belongs to the PAR6 family. In terms of assembly, interacts with PARD3. Interacts with GTP-bound forms of CDC42 and RAC1. Interacts with GTP-bound RHOQ/TC10. Interacts with PALS1. Interacts with the N-terminal part of PRKCI and PRKCZ. Part of a complex with PARD3, CDC42 or RAC1 and PRKCI or PRKCZ. Part of a complex with LLGL1 and PRKCI. Interacts with PARD3B. Interacts with ECT2. Expressed in pancreas and in both adult and fetal kidney. Weakly expressed in placenta and lung. Not expressed in other tissues.

It localises to the cytoplasm. Its subcellular location is the cell membrane. The protein localises to the cell junction. It is found in the tight junction. Adapter protein involved in asymmetrical cell division and cell polarization processes. Probably involved in formation of epithelial tight junctions. Association with PARD3 may prevent the interaction of PARD3 with F11R/JAM1, thereby preventing tight junction assembly. The PARD6-PARD3 complex links GTP-bound Rho small GTPases to atypical protein kinase C proteins. The sequence is that of Partitioning defective 6 homolog beta (PARD6B) from Homo sapiens (Human).